The following is an 859-amino-acid chain: DNA mismatch repair protein MutS (859 aa).

Position 617 to 624 (617 to 624) interacts with ATP; that stretch reads GPNMGGKS. The interval 799 to 821 is disordered; it reads ETTSLPHEQPRAKPGKPAVPQQS.

Belongs to the DNA mismatch repair MutS family.

Functionally, this protein is involved in the repair of mismatches in DNA. It is possible that it carries out the mismatch recognition step. This protein has a weak ATPase activity. In Pseudomonas syringae pv. syringae (strain B728a), this protein is DNA mismatch repair protein MutS.